We begin with the raw amino-acid sequence, 405 residues long: Double C2-like domain-containing protein alpha (405 aa).

The interval 1–94 (MRGRRGDRMT…DSYDSDDTTA (94 aa)) is interaction with UNC13D and DYNLT1. Residues 34-54 (DYFPRRGPGPEGGGGGGGTGC) are disordered. The span at 42 to 54 (GPEGGGGGGGTGC) shows a compositional bias: gly residues. C2 domains are found at residues 94–216 (ALGT…HFNI) and 256–389 (ERGR…ERWH). Ca(2+) contacts are provided by Asp-125, Asp-131, Asp-186, Asp-188, Asp-287, Asp-293, Asp-347, Asp-349, and Asp-355. Residues 220 to 405 (RQVPLPSPSS…PPAAGAYPLA (186 aa)) are interaction with UNC13D.

As to quaternary structure, interacts (via N-terminus) with UNC13A. Interacts with cytoplasmic dynein light chain DYNLT1. Interacts with UNC13D. The cofactor is Ca(2+). In terms of tissue distribution, brain and mast cells.

The protein resides in the cytoplasmic vesicle. It localises to the secretory vesicle. Its subcellular location is the synaptic vesicle membrane. The protein localises to the synapse. It is found in the synaptosome. The protein resides in the lysosome. Calcium sensor which most probably regulates fusion of vesicles with membranes. Binds calcium and phospholipids. May be involved in calcium dependent neurotransmitter release through the interaction with UNC13A. May be involved in calcium-dependent spontaneous release of neurotransmitter in absence of action potentials in neuronal cells. Regulates Ca(2+)-dependent secretory lysosome exocytosis in mast cells. In Mus musculus (Mouse), this protein is Double C2-like domain-containing protein alpha (Doc2a).